Consider the following 220-residue polypeptide: Large ribosomal subunit protein bL25 (220 aa).

Belongs to the bacterial ribosomal protein bL25 family. CTC subfamily. Part of the 50S ribosomal subunit; part of the 5S rRNA/L5/L18/L25 subcomplex. Contacts the 5S rRNA. Binds to the 5S rRNA independently of L5 and L18.

Functionally, this is one of the proteins that binds to the 5S RNA in the ribosome where it forms part of the central protuberance. This Zymomonas mobilis subsp. mobilis (strain ATCC 31821 / ZM4 / CP4) protein is Large ribosomal subunit protein bL25.